A 273-amino-acid chain; its full sequence is Putative pyruvate, phosphate dikinase regulatory protein (273 aa).

Residue 153–160 (GVSRTSKT) coordinates ADP.

It belongs to the pyruvate, phosphate/water dikinase regulatory protein family. PDRP subfamily.

The catalysed reaction is N(tele)-phospho-L-histidyl/L-threonyl-[pyruvate, phosphate dikinase] + ADP = N(tele)-phospho-L-histidyl/O-phospho-L-threonyl-[pyruvate, phosphate dikinase] + AMP + H(+). The enzyme catalyses N(tele)-phospho-L-histidyl/O-phospho-L-threonyl-[pyruvate, phosphate dikinase] + phosphate + H(+) = N(tele)-phospho-L-histidyl/L-threonyl-[pyruvate, phosphate dikinase] + diphosphate. Functionally, bifunctional serine/threonine kinase and phosphorylase involved in the regulation of the pyruvate, phosphate dikinase (PPDK) by catalyzing its phosphorylation/dephosphorylation. This Rhizobium meliloti (strain 1021) (Ensifer meliloti) protein is Putative pyruvate, phosphate dikinase regulatory protein.